The following is a 176-amino-acid chain: Glutamyl-tRNA(Gln) amidotransferase subunit F, mitochondrial (176 aa).

The protein belongs to the GatF family. Subunit of the heterotrimeric GatFAB amidotransferase (AdT) complex, composed of A, B and F subunits.

The protein resides in the mitochondrion inner membrane. The catalysed reaction is L-glutamyl-tRNA(Gln) + L-glutamine + ATP + H2O = L-glutaminyl-tRNA(Gln) + L-glutamate + ADP + phosphate + H(+). Functionally, allows the formation of correctly charged Gln-tRNA(Gln) through the transamidation of misacylated Glu-tRNA(Gln) in the mitochondria. The reaction takes place in the presence of glutamine and ATP through an activated gamma-phospho-Glu-tRNA(Gln). Required for proper protein synthesis within the mitochondrion. This Yarrowia lipolytica (strain CLIB 122 / E 150) (Yeast) protein is Glutamyl-tRNA(Gln) amidotransferase subunit F, mitochondrial.